The chain runs to 314 residues: Epithelial cell adhesion molecule (314 aa).

A signal peptide spans 1 to 23 (MAPPQVLAFGLLLAAATAAVAAA). The Extracellular segment spans residues 24-265 (QQGCVCENYK…PPEFSMQGLQ (242 aa)). Cystine bridges form between Cys-27–Cys-46, Cys-29–Cys-59, Cys-38–Cys-48, Cys-66–Cys-99, Cys-110–Cys-116, and Cys-118–Cys-135. Asn-37 carries N-linked (GlcNAc...) asparagine glycosylation. Positions 63–135 (ASKCLVMKAE…RTDKDSEISC (73 aa)) constitute a Thyroglobulin type-1 domain. Asn-111 carries N-linked (GlcNAc...) asparagine glycosylation. An N-linked (GlcNAc...) asparagine glycan is attached at Asn-198. Residues 266–288 (AGIIAVIAVVAIAIVAGIIVLIV) form a helical membrane-spanning segment. Over 289–314 (STKKRRAKYEKAEIKEMGEMHRELNA) the chain is Cytoplasmic.

The protein belongs to the EPCAM family. Monomer. Interacts with phosphorylated CLDN7. In terms of processing, glycosylation at Asn-198 is crucial for protein stability.

The protein resides in the lateral cell membrane. Its subcellular location is the cell junction. The protein localises to the tight junction. Its function is as follows. May act as a physical homophilic interaction molecule between intestinal epithelial cells (IECs) and intraepithelial lymphocytes (IELs) at the mucosal epithelium for providing immunological barrier as a first line of defense against mucosal infection. Plays a role in embryonic stem cells proliferation and differentiation. Up-regulates the expression of FABP5, MYC and cyclins A and E. The sequence is that of Epithelial cell adhesion molecule (TACSTD1) from Sus scrofa (Pig).